The primary structure comprises 111 residues: Nascent polypeptide-associated complex protein (111 aa).

The region spanning 3 to 72 is the NAC-A/B domain; it reads GMNPRQMKKL…EEVREVLEIS (70 aa).

This sequence belongs to the NAC-alpha family. As to quaternary structure, homodimer. Interacts with the ribosome. Binds ribosomal RNA.

In terms of biological role, contacts the emerging nascent chain on the ribosome. This is Nascent polypeptide-associated complex protein from Thermococcus kodakarensis (strain ATCC BAA-918 / JCM 12380 / KOD1) (Pyrococcus kodakaraensis (strain KOD1)).